The chain runs to 1040 residues: Multidrug resistance protein MdtB (1040 aa).

11 helical membrane-spanning segments follow: residues 15-37 (LFIL…GIIG), 343-365 (VQFE…LRNA), 369-391 (LIPS…FLGF), 398-420 (LMAL…ENIA), 440-462 (IGFT…LFMG), 474-496 (VTLA…MMCA), 535-557 (HPWL…YIWI), 867-889 (VWLI…ESFI), 909-931 (LMMA…IGIV), 968-990 (ILMT…GVGA), and 1000-1022 (MVGG…YLLF).

Belongs to the resistance-nodulation-cell division (RND) (TC 2.A.6) family. MdtB subfamily. In terms of assembly, part of a tripartite efflux system composed of MdtA, MdtB and MdtC. MdtB forms a heteromultimer with MdtC.

It localises to the cell inner membrane. The protein is Multidrug resistance protein MdtB of Pectobacterium atrosepticum (strain SCRI 1043 / ATCC BAA-672) (Erwinia carotovora subsp. atroseptica).